The following is a 180-amino-acid chain: Pyruvate synthase subunit PorC (180 aa).

Heterotetramer of one alpha, one beta, one delta and one gamma chain.

It catalyses the reaction 2 oxidized [2Fe-2S]-[ferredoxin] + pyruvate + CoA = 2 reduced [2Fe-2S]-[ferredoxin] + acetyl-CoA + CO2 + H(+). This is Pyruvate synthase subunit PorC (porC) from Methanothermobacter thermautotrophicus (strain ATCC 29096 / DSM 1053 / JCM 10044 / NBRC 100330 / Delta H) (Methanobacterium thermoautotrophicum).